Consider the following 616-residue polypeptide: uncharacterized protein (616 aa).

Disordered stretches follow at residues 166-243 (SRTY…TPEL) and 272-298 (DHEEEEGQDDDEETEIEIDRGGPIEEI). Residues 184–200 (RVDESRPSENSSRHDYV) show a composition bias toward basic and acidic residues. Residues 221-237 (TRTSNVTQTQPPTNQVF) are compositionally biased toward polar residues. Over residues 272–287 (DHEEEEGQDDDEETEI) the composition is skewed to acidic residues. Positions 343 to 417 (ILIKLKFMND…VHCHISTTPY (75 aa)) constitute a Ubiquitin-like domain.

This is an uncharacterized protein from Caenorhabditis elegans.